Here is a 193-residue protein sequence, read N- to C-terminus: ATP-dependent protease subunit HslV (193 aa).

Threonine 12 is an active-site residue. Residues alanine 167, cysteine 170, and threonine 173 each coordinate Na(+).

Belongs to the peptidase T1B family. HslV subfamily. In terms of assembly, a double ring-shaped homohexamer of HslV is capped on each side by a ring-shaped HslU homohexamer. The assembly of the HslU/HslV complex is dependent on binding of ATP.

It is found in the cytoplasm. It catalyses the reaction ATP-dependent cleavage of peptide bonds with broad specificity.. Its activity is regulated as follows. Allosterically activated by HslU binding. In terms of biological role, protease subunit of a proteasome-like degradation complex believed to be a general protein degrading machinery. This Bartonella quintana (strain Toulouse) (Rochalimaea quintana) protein is ATP-dependent protease subunit HslV.